We begin with the raw amino-acid sequence, 231 residues long: uncharacterized protein (231 aa).

10-34 (VVTGAGSGIGEAIATLLHEEGAKVV) contributes to the NADP(+) binding site. Ser-140 is a binding site for substrate. The Proton acceptor role is filled by Tyr-153.

The protein belongs to the short-chain dehydrogenases/reductases (SDR) family.

This is an uncharacterized protein from Staphylococcus aureus (strain MRSA252).